Consider the following 382-residue polypeptide: Mannitol-1-phosphate 5-dehydrogenase (382 aa).

Position 3-14 (3-14 (ALHFGAGNIGRG)) interacts with NAD(+).

The protein belongs to the mannitol dehydrogenase family.

The catalysed reaction is D-mannitol 1-phosphate + NAD(+) = beta-D-fructose 6-phosphate + NADH + H(+). The protein is Mannitol-1-phosphate 5-dehydrogenase of Cronobacter sakazakii (strain ATCC BAA-894) (Enterobacter sakazakii).